A 345-amino-acid chain; its full sequence is N-acetyl-gamma-glutamyl-phosphate reductase (345 aa).

Residue C149 is part of the active site.

The protein belongs to the NAGSA dehydrogenase family. Type 1 subfamily.

Its subcellular location is the cytoplasm. The catalysed reaction is N-acetyl-L-glutamate 5-semialdehyde + phosphate + NADP(+) = N-acetyl-L-glutamyl 5-phosphate + NADPH + H(+). It functions in the pathway amino-acid biosynthesis; L-arginine biosynthesis; N(2)-acetyl-L-ornithine from L-glutamate: step 3/4. In terms of biological role, catalyzes the NADPH-dependent reduction of N-acetyl-5-glutamyl phosphate to yield N-acetyl-L-glutamate 5-semialdehyde. This chain is N-acetyl-gamma-glutamyl-phosphate reductase, found in Bacillus cereus (strain AH187).